The primary structure comprises 313 residues: Cyclin-dependent kinase B2-1 (313 aa).

Methionine 1 is subject to N-acetylmethionine. The Protein kinase domain maps to 14–304 (FEKLEKVGEG…AKMAMEHPYF (291 aa)). ATP-binding positions include 20-28 (VGEGTYGKV) and lysine 43. Position 25 is a phosphotyrosine (tyrosine 25). The Proton acceptor role is filled by aspartate 145. Threonine 179 is subject to Phosphothreonine.

This sequence belongs to the protein kinase superfamily. CMGC Ser/Thr protein kinase family. CDC2/CDKX subfamily. As to quaternary structure, interacts with CYCD4-1 and CKS1. In terms of tissue distribution, expressed in root tips, shoot apical meristem, leaf primordia vascular tissues and tapetum of anthers.

The enzyme catalyses L-seryl-[protein] + ATP = O-phospho-L-seryl-[protein] + ADP + H(+). The catalysed reaction is L-threonyl-[protein] + ATP = O-phospho-L-threonyl-[protein] + ADP + H(+). It carries out the reaction [DNA-directed RNA polymerase] + ATP = phospho-[DNA-directed RNA polymerase] + ADP + H(+). In Arabidopsis thaliana (Mouse-ear cress), this protein is Cyclin-dependent kinase B2-1 (CDKB2-1).